The primary structure comprises 102 residues: Small ribosomal subunit protein uS10 (102 aa).

The protein belongs to the universal ribosomal protein uS10 family. In terms of assembly, part of the 30S ribosomal subunit.

In terms of biological role, involved in the binding of tRNA to the ribosomes. The chain is Small ribosomal subunit protein uS10 from Methylocella silvestris (strain DSM 15510 / CIP 108128 / LMG 27833 / NCIMB 13906 / BL2).